The chain runs to 318 residues: Glycine--tRNA ligase alpha subunit (318 aa).

This sequence belongs to the class-II aminoacyl-tRNA synthetase family. As to quaternary structure, tetramer of two alpha and two beta subunits.

It localises to the cytoplasm. The enzyme catalyses tRNA(Gly) + glycine + ATP = glycyl-tRNA(Gly) + AMP + diphosphate. In Chelativorans sp. (strain BNC1), this protein is Glycine--tRNA ligase alpha subunit.